Reading from the N-terminus, the 213-residue chain is Sclerostin (213 aa).

An N-terminal signal peptide occupies residues 1–23; sequence MQLPLALCLVCLLVHTAFRVVEG. Positions 41–71 are disordered; sequence GEYPEPPPELENNKTMNRAENGGRPPHHPFE. A glycan (N-linked (GlcNAc...) asparagine) is linked at Asn53. Cystine bridges form between Cys80–Cys134, Cys94–Cys148, Cys105–Cys165, and Cys109–Cys167. One can recognise a CTCK domain in the interval 82–172; the sequence is ELHFTRYVTD…ASCKCKRLTR (91 aa). The N-linked (GlcNAc...) asparagine glycan is linked to Asn175. The segment at 178 to 213 is disordered; that stretch reads ELKDFGTEAARPQKGRKPRPRARSAKANQAELENAY. Positions 190 to 201 are enriched in basic residues; sequence QKGRKPRPRARS.

This sequence belongs to the sclerostin family. As to quaternary structure, interacts with LRP4 (via the extracellular domain); the interaction facilitates the inhibition of Wnt signaling. Interacts with LRP5 (via the first two YWTD-EGF repeat domains); the interaction inhibits Wnt-mediated signaling. Interacts with LRP6. As to expression, widely expressed at low levels with highest levels in bone, cartilage, kidney, liver, bone marrow and primary osteoblasts differentiated for 21 days. Detected in the subendothelial layer of the aortic intima (at protein level).

It is found in the secreted. It localises to the extracellular space. The protein resides in the extracellular matrix. In terms of biological role, negative regulator of bone growth that acts through inhibition of Wnt signaling and bone formation. The polypeptide is Sclerostin (Homo sapiens (Human)).